Consider the following 604-residue polypeptide: Kelch-like protein 20 (604 aa).

Positions Cys-63–Glu-130 constitute a BTB domain. The BACK domain occupies Cys-165 to Gly-267. Kelch repeat units lie at residues Val-314–Asp-360, Leu-362–Gly-408, Tyr-409–Gly-455, Leu-457–Asp-502, Ile-504–Gly-549, and Leu-551–Met-596.

In terms of assembly, component of the BCR(KLHL20) E3 ubiquitin ligase complex, at least composed of cul3, klhl20 and rbx1.

The protein resides in the cytoplasm. It is found in the perinuclear region. Its subcellular location is the nucleus. The protein operates within protein modification; protein ubiquitination. In terms of biological role, substrate-specific adapter of a BCR (BTB-CUL3-RBX1) E3 ubiquitin-protein ligase complex involved in interferon response and anterograde Golgi to endosome transport. The BCR(KLHL20) E3 ubiquitin ligase complex mediates the ubiquitination of target proteins, leading to their degradation by the proteasome. It also specifically mediates 'Lys-33'-linked ubiquitination. This chain is Kelch-like protein 20 (klhl20), found in Xenopus laevis (African clawed frog).